A 240-amino-acid polypeptide reads, in one-letter code: Protein OPG176 (240 aa).

It belongs to the orthopoxvirus OPG176 family. As to quaternary structure, tetramer. Interacts with host MYD88, TRF4, TICAM2 and MAL.

Functionally, BCL2-like protein which disrupts the host immune response by inhibiting the TLR4 signaling pathway leading to NF-kappa-B activation. Acts close to the plasma membrane and targets several host TIR-domain containing adapter proteins including MYD88, TIRAP, TRIF and TICAM2. In turn, blocks the host NF-kappa-B and TRIF-mediated IRF3 activation. The polypeptide is Protein OPG176 (OPG176) (Bos taurus (Bovine)).